Reading from the N-terminus, the 412-residue chain is Gamma-glutamyl phosphate reductase (412 aa).

This sequence belongs to the gamma-glutamyl phosphate reductase family.

It is found in the cytoplasm. It carries out the reaction L-glutamate 5-semialdehyde + phosphate + NADP(+) = L-glutamyl 5-phosphate + NADPH + H(+). Its pathway is amino-acid biosynthesis; L-proline biosynthesis; L-glutamate 5-semialdehyde from L-glutamate: step 2/2. Functionally, catalyzes the NADPH-dependent reduction of L-glutamate 5-phosphate into L-glutamate 5-semialdehyde and phosphate. The product spontaneously undergoes cyclization to form 1-pyrroline-5-carboxylate. This chain is Gamma-glutamyl phosphate reductase, found in Bartonella henselae (strain ATCC 49882 / DSM 28221 / CCUG 30454 / Houston 1) (Rochalimaea henselae).